Reading from the N-terminus, the 377-residue chain is Prostaglandin reductase-3 (377 aa).

The residue at position 35 (Lys35) is an N6-acetyllysine. 7 residues coordinate NADP(+): Thr185, Ser205, Lys209, Tyr224, Ser247, Ile269, and Tyr275. Ser299 carries the phosphoserine modification. NADP(+)-binding positions include 303–305 (FFL) and Asn361.

This sequence belongs to the zinc-containing alcohol dehydrogenase family. Quinone oxidoreductase subfamily. As to expression, widely expressed.

Its subcellular location is the peroxisome. The enzyme catalyses 13,14-dihydro-15-oxo-prostaglandin E2 + NADP(+) = 15-oxoprostaglandin E2 + NADPH + H(+). The catalysed reaction is 13,14-dihydro-15-oxo-prostaglandin E1 + NADP(+) = 15-oxoprostaglandin E1 + NADPH + H(+). It catalyses the reaction 13,14-dihydro-15-oxo-PGF2alpha + NADP(+) = 15-oxoprostaglandin F2alpha + NADPH + H(+). It carries out the reaction 13,14-dihydro-15-oxo-prostaglandin F1alpha + NADP(+) = 15-oxoprostaglandin F1alpha + NADPH + H(+). Functions as 15-oxo-prostaglandin 13-reductase and acts on 15-keto-PGE1, 15-keto-PGE2, 15-keto-PGE1-alpha and 15-keto-PGE2-alpha with highest efficiency towards 15-keto-PGE2-alpha. Overexpression represses transcriptional activity of PPARG and inhibits adipocyte differentiation. The chain is Prostaglandin reductase-3 from Mus musculus (Mouse).